Reading from the N-terminus, the 293-residue chain is tRNA pseudouridine synthase B (293 aa).

The Nucleophile role is filled by Asp40.

It belongs to the pseudouridine synthase TruB family. Type 1 subfamily.

The enzyme catalyses uridine(55) in tRNA = pseudouridine(55) in tRNA. Its function is as follows. Responsible for synthesis of pseudouridine from uracil-55 in the psi GC loop of transfer RNAs. The sequence is that of tRNA pseudouridine synthase B from Rickettsia akari (strain Hartford).